Here is a 207-residue protein sequence, read N- to C-terminus: N-(5'-phosphoribosyl)anthranilate isomerase (207 aa).

It belongs to the TrpF family.

The enzyme catalyses N-(5-phospho-beta-D-ribosyl)anthranilate = 1-(2-carboxyphenylamino)-1-deoxy-D-ribulose 5-phosphate. It functions in the pathway amino-acid biosynthesis; L-tryptophan biosynthesis; L-tryptophan from chorismate: step 3/5. The polypeptide is N-(5'-phosphoribosyl)anthranilate isomerase (Petrotoga mobilis (strain DSM 10674 / SJ95)).